Here is a 104-residue protein sequence, read N- to C-terminus: MSEIRKNDHRLMQVLLAPVISEKATLVADKNEQVVFEVAPDATKQEVKAAVELLFKVEVNSVNVLVSKGKAKRFGRFMGKRKDVKKAYVCLKPGQEINFEAEAK.

Belongs to the universal ribosomal protein uL23 family. In terms of assembly, part of the 50S ribosomal subunit. Contacts protein L29, and trigger factor when it is bound to the ribosome.

Functionally, one of the early assembly proteins it binds 23S rRNA. One of the proteins that surrounds the polypeptide exit tunnel on the outside of the ribosome. Forms the main docking site for trigger factor binding to the ribosome. The chain is Large ribosomal subunit protein uL23 from Paraburkholderia phytofirmans (strain DSM 17436 / LMG 22146 / PsJN) (Burkholderia phytofirmans).